The primary structure comprises 1103 residues: MDFKRRQGPGPGVPPKRARGGLWDEDEPSQFEENLALLEEIEAENRLQEAEEELQLPPQGPAGGQFSTADIDPRWKRPALCALDPNTEPLIFQQLEIDHYVGSAVPLPGGPPTSCNSVPILRAFGVTDEGFSVCCHIHGFAPYFYTPAPPGFGAEHLSDLQRELSTAISRDQRGGKELSGPAVLAIELCSRESMFGYHGHGPSPFLRITLALPRLVAPARRLLEQGIRVPGLGTPSFAPYEANVDFEIRFMVDADIVGCNWLELPAGKYVWRTEKKATQCQLEVDVLWSDVISHPPEGQWQRIAPLRVLSFDIECAGRKGIFPEPERDPVIQICSLGLRWGEPEPFLRLALTLRPCAPILGAKVQSYEREEDLLQAWPNFILAMDPDVITGYNIQNFDLPYLISRAQTLKVDRFPFLGRVTGLRSNIRDSSFQSRQVGRRDSKVVSMVGRVQMDMLQVLLREHKLRSYTLNAVSFHFLGEQKEDVQHSIITDLQNGNEQTRRRLAVYCLRDAFLPLRLLERLMVLVNNVEMARVTGVPLGYLLSRGQQVKVVSQLLRQAMRQGLLMPVVKTEGGEDYTGATVIEPLKGYYDVPIATLDFSSLYPSIMMAHNLCYTTLLRPGAAQKLGLKPDEFIKTPTGDEFVKSSVRKGLLPQILENLLSARKRAKAELAQETDPLRRQVLDGRQLALKVSANSVYGFTGAEVGKLPCLEISQSVTGFGRQMIEKTKQLVESKYTLENGYNANAKVVYGDTDSVMCRFGVSSVAEAMSLGREAANWVSSHFPSPIRLEFEKVYFPYLLISKKRYAGLLFSSQPDTHDRMDCKGLEAVRRDNCPLVANLVTSSLRRILVDRDPDGAVAHAKDVISDLLCNRIDISQLVITKELTRAAADYAGKQAHVELAERMRKRDPGSAPSLGDRVPYVIIGAAKGVAAYMKSEDPLFVLEHSLPIDTQYYLGQQLAKPLLRIFEPILGEGRAESVLLRGDHTRCKTVLTSKVGGLLAFTKRRNCCIGCRSVINHQGAVCEFCQPRESELYQKEVSHLNALEERFSRLWTQCQRCQGSLHEDVICTSRDCPIFYMRKKVRKDLEDQERLLQRFGPPGPEAW.

A disordered region spans residues 1 to 29 (MDFKRRQGPGPGVPPKRARGGLWDEDEPS). The Nuclear localization signal signature appears at 4–19 (KRRQGPGPGVPPKRAR). Arg19 bears the Omega-N-methylarginine mark. A Glycyl lysine isopeptide (Lys-Gly) (interchain with G-Cter in SUMO2) cross-link involves residue Lys570. Zn(2+) contacts are provided by Cys1008, Cys1011, Cys1022, and Cys1025. The CysA-type zinc-finger motif lies at 1008–1025 (CIGCRSVINHQGAVCEFC). [4Fe-4S] cluster is bound by residues Cys1054, Cys1057, Cys1067, and Cys1072. A CysB motif motif is present at residues 1054 to 1072 (CQRCQGSLHEDVICTSRDC).

It belongs to the DNA polymerase type-B family. Component of the tetrameric DNA polymerase delta complex (Pol-delta4), which consists of POLD1/p125, POLD2/p50, POLD3/p66/p68 and POLD4/p12, with POLD1 bearing both DNA polymerase and 3' to 5' proofreading exonuclease activities. Within Pol-delta4, directly interacts with POLD2 and POLD4. Following genotoxic stress by DNA-damaging agents, such as ultraviolet light and methyl methanesulfonate, or by replication stress induced by treatment with hydroxyurea or aphidicolin, Pol-delta4 is converted into a trimeric form of the complex (Pol-delta3) by POLD4 degradation. Pol-delta3 is the major form at S phase replication sites and DNA damage sites. POLD1 displays different catalytic properties depending upon the complex it is found in. It exhibits higher proofreading activity and fidelity than Pol-delta4, making it particularly well suited to respond to DNA damage. Directly interacts with PCNA, as do POLD3 and POLD4; this interaction stimulates Pol-delta4 polymerase activity. As POLD2 and POLD4, directly interacts with WRNIP1; this interaction stimulates DNA polymerase delta-mediated DNA synthesis, independently of the presence of PCNA. This stimulation may be due predominantly to an increase of initiation frequency and also to increased processivity. Also observed as a dimeric complex with POLD2 (Pol-delta2). Pol-delta2 is relatively insensitive to the PCNA stimulation (2-5-fold) compared to Pol-delta4 that is stimulated by over 50-fold. The DNA polymerase delta complex interacts with POLDIP2; this interaction is probably mediated through direct binding to POLD2. Interacts with CIAO1. Interacts with POLDIP2. Interacts with RFC1. It depends on [4Fe-4S] cluster as a cofactor.

Its subcellular location is the nucleus. It catalyses the reaction DNA(n) + a 2'-deoxyribonucleoside 5'-triphosphate = DNA(n+1) + diphosphate. Its activity is regulated as follows. Regulated by alteration of quaternary structure. Exhibits burst rates of DNA synthesis are about 5 times faster in the presence of POLD4 (Pol-delta4 complex) than in its absence (Pol-delta3 complex), while the affinity of the enzyme for its DNA and dNTP substrates appears unchanged. The Pol-delta3 complex is more likely to proofread DNA synthesis because it cleaves single-stranded DNA twice as fast and transfers mismatched DNA from the polymerase to the exonuclease sites 9 times faster compared to the Pol-delta3 complex. Pol-delta3 also extends mismatched primers 3 times more slowly in the absence of POLD4. The conversion of Pol-delta4 into Pol-delta3 is induced by genotoxic stress or by replication stress leading POLD4 degradation. Stimulated in the presence of PCNA. This stimulation is further increased in the presence of KCTD13/PDIP1, most probably via direct interaction between KCTD13 and POLD2. As the catalytic component of the trimeric (Pol-delta3 complex) and tetrameric DNA polymerase delta complexes (Pol-delta4 complex), plays a crucial role in high fidelity genome replication, including in lagging strand synthesis, and repair. Exhibits both DNA polymerase and 3'- to 5'-exonuclease activities. Requires the presence of accessory proteins POLD2, POLD3 and POLD4 for full activity. Depending upon the absence (Pol-delta3) or the presence of POLD4 (Pol-delta4), displays differences in catalytic activity. Most notably, expresses higher proofreading activity in the context of Pol-delta3 compared with that of Pol-delta4. Although both Pol-delta3 and Pol-delta4 process Okazaki fragments in vitro, Pol-delta3 may be better suited to fulfill this task, exhibiting near-absence of strand displacement activity compared to Pol-delta4 and stalling on encounter with the 5'-blocking oligonucleotides. Pol-delta3 idling process may avoid the formation of a gap, while maintaining a nick that can be readily ligated. Along with DNA polymerase kappa, DNA polymerase delta carries out approximately half of nucleotide excision repair (NER) synthesis following UV irradiation. Under conditions of DNA replication stress, in the presence of POLD3 and POLD4, may catalyze the repair of broken replication forks through break-induced replication (BIR). Involved in the translesion synthesis (TLS) of templates carrying O6-methylguanine, 8oxoG or abasic sites. The sequence is that of DNA polymerase delta catalytic subunit (POLD1) from Mesocricetus auratus (Golden hamster).